Here is a 639-residue protein sequence, read N- to C-terminus: Pheromone-processing carboxypeptidase kex1 (639 aa).

An N-terminal signal peptide occupies residues 1 to 30 (MAFSHAPSGWRTALLAGLIATVAWLPAIVA). The Lumenal portion of the chain corresponds to 31–517 (QEKTQADYFI…KAAEWKAYTR (487 aa)). N-linked (GlcNAc...) asparagine glycosylation is present at asparagine 119. Residues serine 183 and aspartate 384 contribute to the active site. Asparagine 435 and asparagine 443 each carry an N-linked (GlcNAc...) asparagine glycan. Residue histidine 446 is part of the active site. Residues 477–504 (DSLIDGEKGPLTSVGDHPNSTKAEEDKS) are disordered. A glycan (N-linked (GlcNAc...) asparagine) is linked at asparagine 495. Residues 518-538 (SGEVALVIAVIVACICGFLLC) form a helical membrane-spanning segment. Over 539–639 (RSRRAKSAYK…DRGRRKEESR (101 aa)) the chain is Cytoplasmic. A disordered region spans residues 580 to 639 (ADFDERELDEVPKKSGKGYGQISSEKGRVPHNDSSFSLGVDSDDDEAGSSDRGRRKEESR). Basic and acidic residues predominate over residues 628–639 (SSDRGRRKEESR).

It belongs to the peptidase S10 family.

Its subcellular location is the golgi apparatus. The protein localises to the trans-Golgi network membrane. The enzyme catalyses Preferential release of a C-terminal arginine or lysine residue.. Protease with a carboxypeptidase B-like function involved in the C-terminal processing of the lysine and arginine residues from protein precursors. Promotes cell fusion and is involved in the programmed cell death. The protein is Pheromone-processing carboxypeptidase kex1 (kex1) of Pyrenophora tritici-repentis (strain Pt-1C-BFP) (Wheat tan spot fungus).